The following is a 1129-amino-acid chain: ISWI chromatin-remodeling complex ATPase ISW1 (1129 aa).

Positions 144–177 (KANGKGKGKHQDVRRRKTEHEEDAELLKEEDSDD) are disordered. Residues 147 to 160 (GKGKGKHQDVRRRK) are compositionally biased toward basic residues. Residues 164–177 (EEDAELLKEEDSDD) show a composition bias toward acidic residues. Residues 208–373 (VSLHKNKIAG…WALLNFLLPD (166 aa)) form the Helicase ATP-binding domain. 221-228 (DEMGLGKT) is an ATP binding site. The short motif at 324–327 (DEAH) is the DEAH box element. The Helicase C-terminal domain maps to 506-657 (VLDKLLKKLK…QLVIQQNRTS (152 aa)). Residues 683–705 (FKSGTSTGSAGTPEPGSGEKGDD) form a disordered region. A Phosphothreonine modification is found at Thr694. Ser846 carries the post-translational modification Phosphoserine. 2 consecutive SANT domains span residues 882–935 (EGFT…SNIE) and 988–1052 (NKRT…LLQC). A compositionally biased stretch (basic and acidic residues) spans 1073–1108 (KEDENGKRIREEFADQTANEKENVDGVESKKAKIED). The tract at residues 1073-1129 (KEDENGKRIREEFADQTANEKENVDGVESKKAKIEDTSNVGTEQLVAEKIPENETTH) is disordered.

Belongs to the SNF2/RAD54 helicase family. ISWI subfamily. As to quaternary structure, component of the ISW1A complex, which at least consists of ISW1 and IOC3. Component of the ISW1B complex, which at least consists of ISW1, IOC2 and IOC4.

It is found in the nucleus. In terms of biological role, catalytic component of ISW1-type complexes, which act by remodeling the chromatin by catalyzing an ATP-dependent alteration in the structure of nucleosomal DNA. They are involved in coordinating transcriptional repression, activation and elongation phases. The ISW1A complex represses gene expression at initiation through specific positioning of a promoter proximal dinucleosome. The ISW1B complex acts within coding regions to control the amount of RNA polymerase II released into productive elongation and to coordinate elongation with termination and pre-mRNA processing. This is ISWI chromatin-remodeling complex ATPase ISW1 (ISW1) from Saccharomyces cerevisiae (strain ATCC 204508 / S288c) (Baker's yeast).